The chain runs to 745 residues: MSLITRLLTGNNTLRLRALESLGKAGYSSHAKFSEHKPIERIRNIGISAHIDSGKTTLTERILFYTGRIAEMHEVRGKDNVGATMDSMELERQRGITIQSAATYTLWKDTNINIIDTPGHVDFTVEVERALRVLDGAVLVLCAVGGVQSQTLTVNRQMKRYNVPCLAFINKLDRLGSNPYRVLSQMRSKMNHNAAFIQLPIGVESNCKGIVDLVREKAIYFEGEHGMDIRLDEIPQDMRVESLERRQELIEHLSNADETLGELFLEEKPFTEDDIKAALRRTCINRTFTPVLVGTALKNKGVQPLLDAVLDYLPNPGEVENLGFIEKEGQDPEKVVLNPARDGKDPFVGLAFKLEAGRFGQLTYLRCYQGVLRKGDNIFNARTNKKVRIARLVRLHSNQMEDVNEVYAGDIFALFGVDCASGDTFTTNPKNNLSMESIFVPEPVVSMAIKPNNTKDRDNFSKAIARFTKEDPTFHFFFDNDVKETLVSGMGELHLEIYAQRMEREYGCPVTLGKPKVAFRETLVGPCEFDYLHKKQSGGSGQYARIIGVMEPLPPNQNTLLEFVDETVGTNVPKQFVPGVEKGYREMAEKGMLSGHKLSGIRFRLQDGGHHIVDSSELAFMLAAHGAIKEVFQNGSWQILEPIMLVEVTAPEEFQGAVMGHLSKRHGIITGTEGTEGWFTVYAEVPLNDMFGYAGELRSSTQGKGEFTMEYSRYSPCLPDVQDQIVRQYQESQGLAQPDKKKKKN.

The 278-residue stretch at 40–317 folds into the tr-type G domain; it reads ERIRNIGISA…AVLDYLPNPG (278 aa). GTP contacts are provided by residues 49–56, 116–120, and 170–173; these read AHIDSGKT, DTPGH, and NKLD.

Belongs to the TRAFAC class translation factor GTPase superfamily. Classic translation factor GTPase family. EF-G/EF-2 subfamily.

The protein localises to the mitochondrion. The protein operates within protein biosynthesis; polypeptide chain elongation. In terms of biological role, mitochondrial GTPase that catalyzes the GTP-dependent ribosomal translocation step during translation elongation. During this step, the ribosome changes from the pre-translocational (PRE) to the post-translocational (POST) state as the newly formed A-site-bound peptidyl-tRNA and P-site-bound deacylated tRNA move to the P and E sites, respectively. Catalyzes the coordinated movement of the two tRNA molecules, the mRNA and conformational changes in the ribosome. Essential during development as it acts as a retrograde signal from mitochondria to the nucleus to slow down cell proliferation if mitochondrial energy output is low. This Drosophila sechellia (Fruit fly) protein is Elongation factor G, mitochondrial.